Here is a 440-residue protein sequence, read N- to C-terminus: Chromosome partition protein MukF (440 aa).

The segment at 208–236 (LSETSGTLRELQDTLEAAGDKLQANLLRI) is leucine-zipper.

It belongs to the MukF family. In terms of assembly, interacts, and probably forms a ternary complex, with MukE and MukB via its C-terminal region. The complex formation is stimulated by calcium or magnesium. It is required for an interaction between MukE and MukB.

The protein localises to the cytoplasm. Its subcellular location is the nucleoid. In terms of biological role, involved in chromosome condensation, segregation and cell cycle progression. May participate in facilitating chromosome segregation by condensation DNA from both sides of a centrally located replisome during cell division. Not required for mini-F plasmid partitioning. Probably acts via its interaction with MukB and MukE. Overexpression results in anucleate cells. It has a calcium binding activity. The polypeptide is Chromosome partition protein MukF (Edwardsiella ictaluri (strain 93-146)).